We begin with the raw amino-acid sequence, 149 residues long: Protein K7 (149 aa).

The protein belongs to the orthopoxvirus OPG044 family. Interacts with DDX3; this interaction inhibits DDX3 and suppresses DDX3-mediated IFN-beta promoter induction. Interacts with TRAF6 and IRAK2; these interactions suppress TLR-dependent NF-KappaB activation.

The protein localises to the host cytoplasm. In terms of biological role, virulence factor that affects the acute immune response to infection. Bcl-2-like protein which, through its interaction with the DEAD box RNA helicase DDX3X/DDX3, prevents TBK1/IKKepsilon-mediated IRF3 activation. Contributes to virulence by binding to the host TRAF6 and IRAK2 and preventing host NF-kappa-B activation. This Homo sapiens (Human) protein is Protein K7 (OPG044).